A 675-amino-acid polypeptide reads, in one-letter code: DNA ligase (675 aa).

Residues 36–40 (DAVYD), 85–86 (SL), and glutamate 118 contribute to the NAD(+) site. The active-site N6-AMP-lysine intermediate is the lysine 120. 4 residues coordinate NAD(+): arginine 141, glutamate 178, lysine 298, and lysine 322. 4 residues coordinate Zn(2+): cysteine 416, cysteine 419, cysteine 434, and cysteine 439. The BRCT domain occupies 598 to 675 (TQPQTLSGKT…SEADLLALLQ (78 aa)).

This sequence belongs to the NAD-dependent DNA ligase family. LigA subfamily. Mg(2+) is required as a cofactor. Requires Mn(2+) as cofactor.

The enzyme catalyses NAD(+) + (deoxyribonucleotide)n-3'-hydroxyl + 5'-phospho-(deoxyribonucleotide)m = (deoxyribonucleotide)n+m + AMP + beta-nicotinamide D-nucleotide.. Functionally, DNA ligase that catalyzes the formation of phosphodiester linkages between 5'-phosphoryl and 3'-hydroxyl groups in double-stranded DNA using NAD as a coenzyme and as the energy source for the reaction. It is essential for DNA replication and repair of damaged DNA. The chain is DNA ligase from Acaryochloris marina (strain MBIC 11017).